The primary structure comprises 619 residues: Zinc finger protein 131 (619 aa).

The region spanning 34–98 is the BTB domain; it reads TDITLIVDGH…TYTAKLMIQG (65 aa). The Nuclear localization signal 1 motif lies at 137 to 148; it reads TGKNEAKKRKIA. Ser-231 carries the phosphoserine modification. 3 consecutive C2H2-type zinc fingers follow at residues 261 to 283, 288 to 311, and 328 to 350; these read FHCE…MKSH, FKCE…NCYH, and HICQ…LRKH. Glycyl lysine isopeptide (Lys-Gly) (interchain with G-Cter in SUMO2) cross-links involve residues Lys-289 and Lys-295. The Nuclear localization signal 2 motif lies at 317 to 328; that stretch reads VSKKQRTGKKIH. A C2H2-type 4; degenerate zinc finger spans residues 356–381; that stretch reads FECSNCHERFARNSTLKCHLTACQTG. C2H2-type zinc fingers lie at residues 392–414 and 420–443; these read YECQ…LVIH and NHCT…SDAH. Basic and acidic residues-rich tracts occupy residues 574-587 and 595-612; these read QEER…AAME and LETK…ENDR. A disordered region spans residues 574–619; that stretch reads QEEREPNHADAAMEEHEDAEGLETKPSEYSQARKTENDRTSLPVLE. A Glycyl lysine isopeptide (Lys-Gly) (interchain with G-Cter in SUMO) cross-link involves residue Lys-598.

Belongs to the krueppel C2H2-type zinc-finger protein family. In terms of processing, monosumoylated at Lys-598 by CBX4 and UHRF2. Sumoylation may potentiate ZNF131 inhibition of estrogen signaling. Sumoylation does not interfere with ubiquitination. Post-translationally, ubiquitinated. In terms of tissue distribution, ubiquitously expressed. Predominant expression is found in the developing central nervous system with strongest signals in the forebrain, midbrain, and hindbrain areas and in the neural tube.

The protein localises to the nucleus. Its function is as follows. May be involved in transcriptional regulation as a repressor of ESR1/ER-alpha signaling. Plays a role during development and organogenesis as well as in the function of the adult central nervous system. The sequence is that of Zinc finger protein 131 (Znf131) from Mus musculus (Mouse).